Consider the following 185-residue polypeptide: Biofilm operon icaADBC HTH-type negative transcriptional regulator IcaR (185 aa).

Residues 1 to 59 (MKDKIIDNAITLFSEKGYDGTTLDDISKSVNIKKASLYYHYDNKEEIYRKSVENCFNYF) form the HTH tetR-type domain. Positions 22–41 (TLDDISKSVNIKKASLYYHY) form a DNA-binding region, H-T-H motif.

As to quaternary structure, homodimer.

In terms of biological role, represses transcription of the icaADBC operon necessary for biofilm production. The protein is Biofilm operon icaADBC HTH-type negative transcriptional regulator IcaR (icaR) of Staphylococcus epidermidis (strain ATCC 35984 / DSM 28319 / BCRC 17069 / CCUG 31568 / BM 3577 / RP62A).